We begin with the raw amino-acid sequence, 417 residues long: mRNA export factor ICP27 homolog (417 aa).

Over residues 1–28 (MEDIIEGGISSDDDFDSSDSSSDEEESD) the composition is skewed to acidic residues. The tract at residues 1–143 (MEDIIEGGIS…NGPLRNGPPR (143 aa)) is disordered. Positions 64–120 (RQRSPITWEHQSPLSRVYRSPSPMRFGKRPRISSNSTSRSCKTSWADRVREAAAQRR) are interaction with RNA. The short motif at 88–94 (RFGKRPR) is the Nuclear localization signal element. Residues 96-107 (SSNSTSRSCKTS) show a composition bias toward low complexity. The interval 106–120 (TSWADRVREAAAQRR) is interaction with host ALYREF or mouse ALYREF2. Basic and acidic residues predominate over residues 108-117 (WADRVREAAA). The short motif at 118–127 (QRRPSRPFRK) is the Nuclear localization signal element. Basic residues predominate over residues 120 to 130 (RPSRPFRKPYS). The segment covering 132–141 (PRNGPLRNGP) has biased composition (low complexity). 4 residues coordinate Zn(2+): Cys295, His385, Cys389, and Cys394. Residues 295-394 (CLMQTTPQDH…HLNKCPSSTC (100 aa)) form a CHC2-type zinc finger.

The protein belongs to the HHV-1 ICP27 protein family. Homodimer. Homodimerization is required for transactivation. Interacts with host ALYREF and with mouse ALYREF2. Associates in a complex with RNA, and host export factors NXF1/TAP and ALYREF or ALYREF2; these interactions allow nuclear export of viral transcripts.

The protein resides in the host cytoplasm. It is found in the host nucleus. In terms of biological role, probably acts as a viral splicing factor that regulates viral RNA splicing. Functions as a multifunctional regulator of the expression of viral lytic genes. Early protein that promotes the accumulation and nuclear export of viral intronless RNA transcripts by interacting with mRNAs and cellular export proteins. This Saimiriine herpesvirus 2 (strain 11) (SaHV-2) protein is mRNA export factor ICP27 homolog (EJRF1).